Reading from the N-terminus, the 62-residue chain is UPF0434 protein azo1471 (62 aa).

It belongs to the UPF0434 family.

The sequence is that of UPF0434 protein azo1471 from Azoarcus sp. (strain BH72).